A 171-amino-acid polypeptide reads, in one-letter code: Shikimate kinase (171 aa).

14-19 is an ATP binding site; sequence GAGKST. Residue Ser-18 participates in Mg(2+) binding. Asp-36, Arg-60, and Gly-82 together coordinate substrate. Arg-120 is a binding site for ATP. Arg-139 provides a ligand contact to substrate. Residue Gln-156 participates in ATP binding.

It belongs to the shikimate kinase family. In terms of assembly, monomer. The cofactor is Mg(2+).

It is found in the cytoplasm. The catalysed reaction is shikimate + ATP = 3-phosphoshikimate + ADP + H(+). The protein operates within metabolic intermediate biosynthesis; chorismate biosynthesis; chorismate from D-erythrose 4-phosphate and phosphoenolpyruvate: step 5/7. Functionally, catalyzes the specific phosphorylation of the 3-hydroxyl group of shikimic acid using ATP as a cosubstrate. The polypeptide is Shikimate kinase (Shewanella sediminis (strain HAW-EB3)).